The sequence spans 379 residues: Chaperone protein DnaJ (379 aa).

The region spanning 5–70 is the J domain; sequence DYYELLEVSR…QKRAAYDQFG (66 aa). A CR-type zinc finger spans residues 135–213; the sequence is GKEVEITVPR…CHGQGRVRES (79 aa). Zn(2+) is bound by residues cysteine 148, cysteine 151, cysteine 165, cysteine 168, cysteine 187, cysteine 190, cysteine 201, and cysteine 204. CXXCXGXG motif repeat units follow at residues 148–155, 165–172, 187–194, and 201–208; these read CTVCEGSG, CETCQGMG, CPTCHGEG, and CASCHGQG.

The protein belongs to the DnaJ family. In terms of assembly, homodimer. Zn(2+) serves as cofactor.

The protein localises to the cytoplasm. Its function is as follows. Participates actively in the response to hyperosmotic and heat shock by preventing the aggregation of stress-denatured proteins and by disaggregating proteins, also in an autonomous, DnaK-independent fashion. Unfolded proteins bind initially to DnaJ; upon interaction with the DnaJ-bound protein, DnaK hydrolyzes its bound ATP, resulting in the formation of a stable complex. GrpE releases ADP from DnaK; ATP binding to DnaK triggers the release of the substrate protein, thus completing the reaction cycle. Several rounds of ATP-dependent interactions between DnaJ, DnaK and GrpE are required for fully efficient folding. Also involved, together with DnaK and GrpE, in the DNA replication of plasmids through activation of initiation proteins. In Legionella pneumophila (strain Corby), this protein is Chaperone protein DnaJ.